We begin with the raw amino-acid sequence, 534 residues long: CTP synthase (534 aa).

The segment at 1–267 (MTKYIFVTGG…DQIVCDHLKL (267 aa)) is amidoligase domain. Residue Ser-13 coordinates CTP. Ser-13 provides a ligand contact to UTP. 14–19 (SIGKGI) is an ATP binding site. Tyr-54 contacts L-glutamine. Asp-71 contributes to the ATP binding site. Mg(2+) is bound by residues Asp-71 and Glu-141. Residues 148-150 (DIE), 188-193 (KTKPTQ), and Lys-224 contribute to the CTP site. Residues 188-193 (KTKPTQ) and Lys-224 each bind UTP. 240–242 (RDV) lines the ATP pocket. In terms of domain architecture, Glutamine amidotransferase type-1 spans 292–534 (KIALVGKYVE…FVTAAIKNSN (243 aa)). Gly-354 is a binding site for L-glutamine. Cys-381 acts as the Nucleophile; for glutamine hydrolysis in catalysis. Residues 382-385 (LGMQ), Glu-405, and Arg-463 each bind L-glutamine. Residues His-508 and Glu-510 contribute to the active site.

Belongs to the CTP synthase family. In terms of assembly, homotetramer.

The enzyme catalyses UTP + L-glutamine + ATP + H2O = CTP + L-glutamate + ADP + phosphate + 2 H(+). It catalyses the reaction L-glutamine + H2O = L-glutamate + NH4(+). The catalysed reaction is UTP + NH4(+) + ATP = CTP + ADP + phosphate + 2 H(+). Its pathway is pyrimidine metabolism; CTP biosynthesis via de novo pathway; CTP from UDP: step 2/2. With respect to regulation, allosterically activated by GTP, when glutamine is the substrate; GTP has no effect on the reaction when ammonia is the substrate. The allosteric effector GTP functions by stabilizing the protein conformation that binds the tetrahedral intermediate(s) formed during glutamine hydrolysis. Inhibited by the product CTP, via allosteric rather than competitive inhibition. Functionally, catalyzes the ATP-dependent amination of UTP to CTP with either L-glutamine or ammonia as the source of nitrogen. Regulates intracellular CTP levels through interactions with the four ribonucleotide triphosphates. This Streptococcus pyogenes serotype M4 (strain MGAS10750) protein is CTP synthase.